The primary structure comprises 146 residues: Hemoglobin subunit beta (146 aa).

At Val1 the chain carries N-acetylvaline. The region spanning 2–146 is the Globin domain; sequence HLTDAEKAAI…VATALGHKYH (145 aa). Lys59 carries the post-translational modification N6-acetyllysine. His63 provides a ligand contact to heme b. Position 82 is an N6-acetyllysine (Lys82). Residue His92 participates in heme b binding. Cys93 bears the S-nitrosocysteine mark. Lys144 is subject to N6-acetyllysine.

This sequence belongs to the globin family. As to quaternary structure, heterotetramer of two alpha chains and two beta chains. In terms of tissue distribution, red blood cells.

Its function is as follows. Involved in oxygen transport from the lung to the various peripheral tissues. The protein is Hemoglobin subunit beta (HBB) of Ondatra zibethicus (Muskrat).